The primary structure comprises 180 residues: ATP synthase subunit delta (180 aa).

It belongs to the ATPase delta chain family. In terms of assembly, F-type ATPases have 2 components, F(1) - the catalytic core - and F(0) - the membrane proton channel. F(1) has five subunits: alpha(3), beta(3), gamma(1), delta(1), epsilon(1). CF(0) has four main subunits: a(1), b(1), b'(1) and c(10-14). The alpha and beta chains form an alternating ring which encloses part of the gamma chain. F(1) is attached to F(0) by a central stalk formed by the gamma and epsilon chains, while a peripheral stalk is formed by the delta, b and b' chains.

Its subcellular location is the cellular thylakoid membrane. Functionally, f(1)F(0) ATP synthase produces ATP from ADP in the presence of a proton or sodium gradient. F-type ATPases consist of two structural domains, F(1) containing the extramembraneous catalytic core and F(0) containing the membrane proton channel, linked together by a central stalk and a peripheral stalk. During catalysis, ATP synthesis in the catalytic domain of F(1) is coupled via a rotary mechanism of the central stalk subunits to proton translocation. Its function is as follows. This protein is part of the stalk that links CF(0) to CF(1). It either transmits conformational changes from CF(0) to CF(1) or is implicated in proton conduction. The polypeptide is ATP synthase subunit delta (Prochlorococcus marinus subsp. pastoris (strain CCMP1986 / NIES-2087 / MED4)).